The following is a 270-amino-acid chain: MKMTSKKMKDELMKRLSRPEWDFQYDSEKEVLRIEQKDSKKGINVSLPGVVAKWEVNKEKAIEEVAYYVQEALIAMHKEENSAAKILPVIRSTSFPKQAEEGNPFIMTDHTAETRIYYALDSNKTYRLIDERLLQKLGLTEQQVREMALFNARSLSYEFKQDTVAGNTFYFLNTNDGYDATRILNESLLQSMREKISGDMVVAVPHQDVLIIADIVNEIGYDIIAQMTMKFFAEGHVPITSLSFVYEDGDFEPIFILAKNRKKTDGKEKG.

It belongs to the UPF0354 family.

This is UPF0354 protein BCAH187_A4826 from Bacillus cereus (strain AH187).